The following is a 357-amino-acid chain: UDP-N-acetylglucosamine--N-acetylmuramyl-(pentapeptide) pyrophosphoryl-undecaprenol N-acetylglucosamine transferase (357 aa).

UDP-N-acetyl-alpha-D-glucosamine contacts are provided by residues 14–16, asparagine 125, serine 190, and glutamine 290; that span reads SGG.

Belongs to the glycosyltransferase 28 family. MurG subfamily.

It localises to the cell inner membrane. It carries out the reaction di-trans,octa-cis-undecaprenyl diphospho-N-acetyl-alpha-D-muramoyl-L-alanyl-D-glutamyl-meso-2,6-diaminopimeloyl-D-alanyl-D-alanine + UDP-N-acetyl-alpha-D-glucosamine = di-trans,octa-cis-undecaprenyl diphospho-[N-acetyl-alpha-D-glucosaminyl-(1-&gt;4)]-N-acetyl-alpha-D-muramoyl-L-alanyl-D-glutamyl-meso-2,6-diaminopimeloyl-D-alanyl-D-alanine + UDP + H(+). Its pathway is cell wall biogenesis; peptidoglycan biosynthesis. Cell wall formation. Catalyzes the transfer of a GlcNAc subunit on undecaprenyl-pyrophosphoryl-MurNAc-pentapeptide (lipid intermediate I) to form undecaprenyl-pyrophosphoryl-MurNAc-(pentapeptide)GlcNAc (lipid intermediate II). This chain is UDP-N-acetylglucosamine--N-acetylmuramyl-(pentapeptide) pyrophosphoryl-undecaprenol N-acetylglucosamine transferase, found in Chlamydia felis (strain Fe/C-56) (Chlamydophila felis).